The following is a 347-amino-acid chain: Queuosine 5'-phosphate N-glycosylase/hydrolase (347 aa).

5 residues coordinate queuine: histidine 53, phenylalanine 237, aspartate 239, aspartate 321, and aspartate 326. Catalysis depends on aspartate 239, which acts as the Nucleophile or transition state stabilizer.

The protein belongs to the QNG1 protein family.

The catalysed reaction is queuosine 5'-phosphate + H2O = queuine + D-ribose 5-phosphate. In terms of biological role, catalyzes the hydrolysis of queuosine 5'-phosphate, releasing the nucleobase queuine (q). Is required for salvage of queuine from exogenous queuosine (Q) that is imported and then converted to queuosine 5'-phosphate intracellularly. The sequence is that of Queuosine 5'-phosphate N-glycosylase/hydrolase from Nematostella vectensis (Starlet sea anemone).